A 342-amino-acid polypeptide reads, in one-letter code: Inositol 2-dehydrogenase 2 (342 aa).

This sequence belongs to the Gfo/Idh/MocA family. As to quaternary structure, homotetramer.

The enzyme catalyses myo-inositol + NAD(+) = scyllo-inosose + NADH + H(+). Its function is as follows. Involved in the oxidation of myo-inositol (MI) to 2-keto-myo-inositol (2KMI or 2-inosose). This Mycolicibacterium vanbaalenii (strain DSM 7251 / JCM 13017 / BCRC 16820 / KCTC 9966 / NRRL B-24157 / PYR-1) (Mycobacterium vanbaalenii) protein is Inositol 2-dehydrogenase 2.